We begin with the raw amino-acid sequence, 120 residues long: NAD(P)H-quinone oxidoreductase subunit 3 (120 aa).

A run of 3 helical transmembrane segments spans residues 10 to 30 (LLVF…ASAL), 64 to 84 (MFAL…PWAV), and 89 to 109 (LGLL…VGLV).

Belongs to the complex I subunit 3 family. NDH-1 can be composed of about 15 different subunits; different subcomplexes with different compositions have been identified which probably have different functions.

It is found in the cellular thylakoid membrane. It catalyses the reaction a plastoquinone + NADH + (n+1) H(+)(in) = a plastoquinol + NAD(+) + n H(+)(out). It carries out the reaction a plastoquinone + NADPH + (n+1) H(+)(in) = a plastoquinol + NADP(+) + n H(+)(out). NDH-1 shuttles electrons from an unknown electron donor, via FMN and iron-sulfur (Fe-S) centers, to quinones in the respiratory and/or the photosynthetic chain. The immediate electron acceptor for the enzyme in this species is believed to be plastoquinone. Couples the redox reaction to proton translocation, and thus conserves the redox energy in a proton gradient. Cyanobacterial NDH-1 also plays a role in inorganic carbon-concentration. This is NAD(P)H-quinone oxidoreductase subunit 3 from Synechococcus sp. (strain JA-2-3B'a(2-13)) (Cyanobacteria bacterium Yellowstone B-Prime).